A 442-amino-acid chain; its full sequence is Dol-P-Man:Man(5)GlcNAc(2)-PP-Dol alpha-1,3-mannosyltransferase (442 aa).

Topologically, residues 1–34 (MAAPSSRPESNPPLYKQALDFALDVANGRHALSK) are lumenal. The chain crosses the membrane as a helical span at residues 35–55 (LIPPALFLVDALLCGLIIWKV). Over 56 to 84 (PYTEIDWAAYMEQVSQILSGERDYTKVRG) the chain is Cytoplasmic. The helical transmembrane segment at 85–105 (GTGPLVYPAAHVYIYTGLYHL) threads the bilayer. The Lumenal segment spans residues 106-111 (TDEGRN). A helical membrane pass occupies residues 112-132 (ILLAQQLFAGLYMVTLAVVMG). Residues 133–155 (CYWQAKAPPYLFPLLTLSKRLHS) lie on the Cytoplasmic side of the membrane. A helical membrane pass occupies residues 156 to 176 (IFVLRCFNDCFAVLFLWLAIF). Residues 177 to 198 (FFQRRNWQAGALLYTLGLGVKM) are Lumenal-facing. The helical transmembrane segment at 199-219 (TLLLSLPAVGIVLFLGSGSFV) threads the bilayer. A topological domain (cytoplasmic) is located at residue T220. Residues 221-241 (TLQLVATMGLVQILIGVPFLA) form a helical membrane-spanning segment. Residues 242–272 (HYPTEYLSRAFELSRQFFFKWTVNWRFVGEE) lie on the Lumenal side of the membrane. Residues 273 to 293 (IFLSKGFALTLLALHVLVLGI) form a helical membrane-spanning segment. Residues 294–333 (FITTRWIKPARKSLVQLISPVLLAGKPPLTVPEHRAAARD) are Cytoplasmic-facing. A helical transmembrane segment spans residues 334 to 354 (VTPRYIMTTILSANAVGLLFA). At 355–376 (RSLHYQFYAYVAWSTPFLLWRA) the chain is on the lumenal side. A helical membrane pass occupies residues 377–397 (GLHPVLVYLLWAVHEWAWNVF). Over 398-401 (PSTP) the chain is Cytoplasmic. Residues 402–422 (ASSAVVVGVLGVTVAGVWFGA) form a helical membrane-spanning segment. Over 423 to 442 (REEWEPGMKSSSKKEEAAMR) the chain is Lumenal.

It belongs to the glycosyltransferase ALG3 family.

The protein resides in the endoplasmic reticulum membrane. The enzyme catalyses an alpha-D-Man-(1-&gt;2)-alpha-D-Man-(1-&gt;2)-alpha-D-Man-(1-&gt;3)-[alpha-D-Man-(1-&gt;6)]-beta-D-Man-(1-&gt;4)-beta-D-GlcNAc-(1-&gt;4)-alpha-D-GlcNAc-diphospho-di-trans,poly-cis-dolichol + a di-trans,poly-cis-dolichyl beta-D-mannosyl phosphate = an alpha-D-Man-(1-&gt;2)-alpha-D-Man-(1-&gt;2)-alpha-D-Man-(1-&gt;3)-[alpha-D-Man-(1-&gt;3)-alpha-D-Man-(1-&gt;6)]-beta-D-Man-(1-&gt;4)-beta-D-GlcNAc-(1-&gt;4)-alpha-D-GlcNAc-diphospho-di-trans,poly-cis-dolichol + a di-trans,poly-cis-dolichyl phosphate + H(+). The protein operates within protein modification; protein glycosylation. In terms of biological role, dol-P-Man:Man(5)GlcNAc(2)-PP-Dol alpha-1,3-mannosyltransferase that operates in the biosynthetic pathway of dolichol-linked oligosaccharides, the glycan precursors employed in protein asparagine (N)-glycosylation. The assembly of dolichol-linked oligosaccharides begins on the cytosolic side of the endoplasmic reticulum membrane and finishes in its lumen. The sequential addition of sugars to dolichol pyrophosphate produces dolichol-linked oligosaccharides containing fourteen sugars, including two GlcNAcs, nine mannoses and three glucoses. Once assembled, the oligosaccharide is transferred from the lipid to nascent proteins by oligosaccharyltransferases. In the lumen of the endoplasmic reticulum, adds the first dolichyl beta-D-mannosyl phosphate derived mannose in an alpha-1,3 linkage to Man(5)GlcNAc(2)-PP-dolichol to produce Man(6)GlcNAc(2)-PP-dolichol. This is Dol-P-Man:Man(5)GlcNAc(2)-PP-Dol alpha-1,3-mannosyltransferase (alg-3) from Neurospora crassa (strain ATCC 24698 / 74-OR23-1A / CBS 708.71 / DSM 1257 / FGSC 987).